The primary structure comprises 301 residues: 4-diphosphocytidyl-2-C-methyl-D-erythritol kinase (301 aa).

Lysine 10 is a catalytic residue. Position 96–106 (96–106 (PMGGGVGGGSS)) interacts with ATP. Aspartate 138 is an active-site residue.

It belongs to the GHMP kinase family. IspE subfamily.

The enzyme catalyses 4-CDP-2-C-methyl-D-erythritol + ATP = 4-CDP-2-C-methyl-D-erythritol 2-phosphate + ADP + H(+). It participates in isoprenoid biosynthesis; isopentenyl diphosphate biosynthesis via DXP pathway; isopentenyl diphosphate from 1-deoxy-D-xylulose 5-phosphate: step 3/6. Functionally, catalyzes the phosphorylation of the position 2 hydroxy group of 4-diphosphocytidyl-2C-methyl-D-erythritol. The protein is 4-diphosphocytidyl-2-C-methyl-D-erythritol kinase of Alcanivorax borkumensis (strain ATCC 700651 / DSM 11573 / NCIMB 13689 / SK2).